Consider the following 377-residue polypeptide: Cyclin-I (377 aa).

The segment at 357–377 is disordered; that stretch reads DLSRQEGHASPCPPLQPVSVM. Pro residues predominate over residues 367 to 377; sequence PCPPLQPVSVM.

It belongs to the cyclin family. As to expression, highest levels in adult heart, brain and skeletal muscle. Lower levels in adult placenta, lung, kidney and pancreas. Also high levels in fetal brain and lower levels in fetal lung, liver and kidney. Also abundant in testis and thyroid.

It is found in the nucleus membrane. The protein is Cyclin-I of Homo sapiens (Human).